Consider the following 1324-residue polypeptide: Ubiquitin carboxyl-terminal hydrolase 42 (1324 aa).

Disordered regions lie at residues 1-38 (MTIV…SASW) and 63-87 (YSSS…DGIA). Over residues 10 to 25 (SSDPSAYQNQPGSSEA) the composition is skewed to polar residues. Positions 63–80 (YSSSSVPDKSKPSPQKDQ) are enriched in low complexity. At S75 the chain carries Phosphoserine. A USP domain is found at 111 to 412 (AGLQNLGNTC…QAYVLFYIRS (302 aa)). C120 (nucleophile) is an active-site residue. H371 (proton acceptor) is an active-site residue. 6 disordered regions span residues 452 to 494 (IGPQ…NRAS), 536 to 707 (QSQP…MPAP), 722 to 1026 (LSNK…RHRS), 1085 to 1131 (RAGL…HPDR), 1149 to 1254 (DRFH…VKDS), and 1275 to 1294 (GGFP…FREK). Over residues 477-489 (PSSSMSSPNGNSS) the composition is skewed to low complexity. Position 483 is a phosphoserine (S483). Over residues 536–564 (QSQPNLHSNSLENPTKPVPSSTITNSAVQ) the composition is skewed to polar residues. Low complexity predominate over residues 565 to 576 (STSNASTMSVSS). A compositionally biased stretch (polar residues) spans 586–603 (ESCSQPVMNGKSKLNSSV). A phosphoserine mark is found at S754 and S856. Basic and acidic residues-rich tracts occupy residues 938–974 (AKEK…SKTE), 984–1013 (CPRE…ERRS), 1101–1113 (RGCE…ERHR), 1149–1158 (DRFHEHENGK), and 1165–1191 (DSVE…EEPK). Residue S1181 is modified to Phosphoserine. Basic residues predominate over residues 1192–1206 (AKKHKKSKKKKKSKD). The span at 1207–1218 (KHRDRDSRHQQD) shows a compositional bias: basic and acidic residues. Phosphoserine occurs at positions 1219, 1222, and 1226. Residues 1231 to 1245 (HRHKKKKKKKKRHSR) show a composition bias toward basic residues. At S1247 the chain carries Phosphoserine.

This sequence belongs to the peptidase C19 family. As to expression, broadly expressed.

The enzyme catalyses Thiol-dependent hydrolysis of ester, thioester, amide, peptide and isopeptide bonds formed by the C-terminal Gly of ubiquitin (a 76-residue protein attached to proteins as an intracellular targeting signal).. Its function is as follows. Deubiquitinating enzyme which may play an important role during spermatogenesis. The polypeptide is Ubiquitin carboxyl-terminal hydrolase 42 (USP42) (Homo sapiens (Human)).